The following is a 732-amino-acid chain: Probable ATP-dependent RNA helicase DHX35 homolog (732 aa).

The segment at 1-50 (MSYHPGHGHRQEPRKGAGARRGFARPDDSADAPRTGPLIFEERSTENAGA) is disordered. The 165-residue stretch at 87 to 251 (LYMCERYRTI…FEMNETGNSD (165 aa)) folds into the Helicase ATP-binding domain. 100–107 (GETGCGKS) contributes to the ATP binding site. The short motif at 198–201 (DEAH) is the DEAH box element. One can recognise a Helicase C-terminal domain in the interval 283 to 457 (AVDTVINIHK…STILQLKALG (175 aa)).

It belongs to the DEAD box helicase family. DEAH subfamily.

It carries out the reaction ATP + H2O = ADP + phosphate + H(+). The chain is Probable ATP-dependent RNA helicase DHX35 homolog from Caenorhabditis elegans.